The primary structure comprises 501 residues: MESRLGWLTELQTETGANLRRTSIIGTIGPKTNNPETLVALRKAGLNIVRMNFSHGSYEYHQSVIDNARKSEELYPGRPLAIALDTKGPEIRTGTTTNEVDYPIPPNHEMIFSIDDKYAKACDDKVMYIDYKNITKVIEKGKIIYVDDGVLSFEVLEVVDEQTLKVKSLNAGKICSHKGVNLPGTDVDLPALSEKDKSDLRFGVKNGVHMVFASFIRTAQDVLTIREVLGEDGKDVKIIVKIENQQGVNNFDEILKVTDGVMVARGDLGIEIPAPQVFAVQKKLIAKCNLAGKPVICATQMLESMTYNPRPTRAEVSDVGNAVLDGADCVMLSGETAKGNYPINAVTIMAETALIAEQAIPYVATYDDLRNFTPKPTSTTETIAAAAVSSVFEQKAKAIIVLSTTGDTPRLVSKYKPNVPIVMVTRNPRAARFSHLYRGVFPFVYESDTESEWTKDVESRLNFGIAKAKEFGMLKEGDTIVTIQGFAAGVGHSNTLRVLTV.

R50 serves as a coordination point for substrate. K(+) contacts are provided by N52, S54, D85, and T86. 52–55 (NFSH) is an ATP binding site. ATP contacts are provided by R92 and K178. Residue E243 coordinates Mg(2+). Residues G266, D267, and T299 each contribute to the substrate site. D267 lines the Mg(2+) pocket.

It belongs to the pyruvate kinase family. As to quaternary structure, homotetramer. Mg(2+) serves as cofactor. Requires K(+) as cofactor.

The catalysed reaction is pyruvate + ATP = phosphoenolpyruvate + ADP + H(+). Its pathway is carbohydrate degradation; glycolysis; pyruvate from D-glyceraldehyde 3-phosphate: step 5/5. This chain is Pyruvate kinase (PYK1), found in Lachancea kluyveri (strain ATCC 58438 / CBS 3082 / BCRC 21498 / NBRC 1685 / JCM 7257 / NCYC 543 / NRRL Y-12651) (Yeast).